Here is a 192-residue protein sequence, read N- to C-terminus: Phosphoheptose isomerase (192 aa).

The SIS domain maps to 36 to 192 (CVDSLAAGGK…DQVEAVAAPA (157 aa)). 51-53 (NGG) serves as a coordination point for substrate. Histidine 60 and glutamate 64 together coordinate Zn(2+). Substrate-binding positions include glutamate 64, 93-94 (ND), 119-121 (TTS), serine 124, and glutamine 171. Zn(2+) is bound by residues glutamine 171 and histidine 179.

This sequence belongs to the SIS family. GmhA subfamily. As to quaternary structure, homotetramer. It depends on Zn(2+) as a cofactor.

It localises to the cytoplasm. It catalyses the reaction 2 D-sedoheptulose 7-phosphate = D-glycero-alpha-D-manno-heptose 7-phosphate + D-glycero-beta-D-manno-heptose 7-phosphate. The protein operates within carbohydrate biosynthesis; D-glycero-D-manno-heptose 7-phosphate biosynthesis; D-glycero-alpha-D-manno-heptose 7-phosphate and D-glycero-beta-D-manno-heptose 7-phosphate from sedoheptulose 7-phosphate: step 1/1. Its function is as follows. Catalyzes the isomerization of sedoheptulose 7-phosphate in D-glycero-D-manno-heptose 7-phosphate. The protein is Phosphoheptose isomerase of Paramagnetospirillum magneticum (strain ATCC 700264 / AMB-1) (Magnetospirillum magneticum).